The sequence spans 336 residues: MTYSKIQNILPGLGLSVAITAAAMVLEKIEEHYAGRAWLEALVIAILLGTAVRSLARPGPRFNKGINFSAKLLLEIAVALLGASISASAVIEAGSGLIFGIAAVVAVAITLSYGIGRLLKLPHRMAVLVACGNSICGNSAIAAMAPVIGAESEDVAASIAFTAILGVIVVLTLPLLVPLLGLSFTQYGILAGLTVYAVPQVLAATAPVSLLSVQLGTLVKLVRVLMLGPVILVFALISGNKNADVKPGFFQLVPWFIIGFLAMMALHSLHLIPEAILPAIQYASMLLTIISMAALGLGVDIRSVASAGGRVTLTAILSLIALCCISLGLIHMLGVA.

11 helical membrane-spanning segments follow: residues 9–26, 36–55, 68–90, 94–116, 128–150, 160–182, 189–211, 221–240, 247–269, 279–301, and 313–335; these read ILPG…AMVL, RAWL…VRSL, FSAK…ASAV, GSGL…YGIG, LVAC…VIGA, AFTA…LLGL, ILAG…VSLL, LVRV…ISGN, PGFF…LHSL, AIQY…GVDI, and LTAI…MLGV.

This sequence belongs to the UPF0324 family.

The protein resides in the cell membrane. The polypeptide is UPF0324 membrane protein BR0028/BS1330_I0028 (Brucella suis biovar 1 (strain 1330)).